The sequence spans 101 residues: Small ribosomal subunit protein uS14 (101 aa).

The protein belongs to the universal ribosomal protein uS14 family. As to quaternary structure, part of the 30S ribosomal subunit. Contacts proteins S3 and S10.

Its function is as follows. Binds 16S rRNA, required for the assembly of 30S particles and may also be responsible for determining the conformation of the 16S rRNA at the A site. This is Small ribosomal subunit protein uS14 from Shewanella sediminis (strain HAW-EB3).